The following is a 313-amino-acid chain: N-acetyl-gamma-glutamyl-phosphate reductase (313 aa).

The active site involves C117.

Belongs to the NAGSA dehydrogenase family. Type 2 subfamily.

Its subcellular location is the cytoplasm. The enzyme catalyses N-acetyl-L-glutamate 5-semialdehyde + phosphate + NADP(+) = N-acetyl-L-glutamyl 5-phosphate + NADPH + H(+). The protein operates within amino-acid biosynthesis; L-arginine biosynthesis; N(2)-acetyl-L-ornithine from L-glutamate: step 3/4. Its function is as follows. Catalyzes the NADPH-dependent reduction of N-acetyl-5-glutamyl phosphate to yield N-acetyl-L-glutamate 5-semialdehyde. This chain is N-acetyl-gamma-glutamyl-phosphate reductase, found in Burkholderia cenocepacia (strain ATCC BAA-245 / DSM 16553 / LMG 16656 / NCTC 13227 / J2315 / CF5610) (Burkholderia cepacia (strain J2315)).